The sequence spans 451 residues: Serine--tRNA ligase (451 aa).

258–260 (TSE) is a binding site for L-serine. 289 to 291 (RSE) contributes to the ATP binding site. L-serine is bound at residue Glu-312. 376–379 (EISS) is an ATP binding site. Ser-411 contacts L-serine.

It belongs to the class-II aminoacyl-tRNA synthetase family. Type-1 seryl-tRNA synthetase subfamily. Homodimer. The tRNA molecule binds across the dimer.

It localises to the cytoplasm. It catalyses the reaction tRNA(Ser) + L-serine + ATP = L-seryl-tRNA(Ser) + AMP + diphosphate + H(+). It carries out the reaction tRNA(Sec) + L-serine + ATP = L-seryl-tRNA(Sec) + AMP + diphosphate + H(+). Its pathway is aminoacyl-tRNA biosynthesis; selenocysteinyl-tRNA(Sec) biosynthesis; L-seryl-tRNA(Sec) from L-serine and tRNA(Sec): step 1/1. In terms of biological role, catalyzes the attachment of serine to tRNA(Ser). Is also able to aminoacylate tRNA(Sec) with serine, to form the misacylated tRNA L-seryl-tRNA(Sec), which will be further converted into selenocysteinyl-tRNA(Sec). This is Serine--tRNA ligase from Bordetella bronchiseptica (strain ATCC BAA-588 / NCTC 13252 / RB50) (Alcaligenes bronchisepticus).